The sequence spans 317 residues: MSCSNGIWPTVSNLCGSLSFFTSVISLFPQIIETYRDKSVDGLSPYFLLAWLCGDITSLIGAKLTGQLLFQILLAIYFLLNDSFVCGQYYYYGVLHENKLATVGHEPKPLLPELVENGELLREEEDMIQGGSSAESPRSSRRRSAITAALAIAHTISTASAYPLNVGSTQSQVGPPGDGKNSQLGTILSWIGASFYVGARIPQLIKNYNRKSTDGLSPFLFATTLLCNITYNLSIFTSCRFLDNQNKREFIVNELPFIFGSAGTIAFDLIYFYQYYILYATDMQLRELERELYSPEEDSAAQLVTERTSLLSGETQT.

The Vacuolar portion of the chain corresponds to 1 to 13 (MSCSNGIWPTVSN). The 64-residue stretch at 8–71 (WPTVSNLCGS…AKLTGQLLFQ (64 aa)) folds into the PQ-loop 1 domain. A helical transmembrane segment spans residues 14–34 (LCGSLSFFTSVISLFPQIIET). The Cytoplasmic segment spans residues 35–39 (YRDKS). A helical transmembrane segment spans residues 40–62 (VDGLSPYFLLAWLCGDITSLIGA). Residues 63-71 (KLTGQLLFQ) lie on the Vacuolar side of the membrane. A helical transmembrane segment spans residues 72–94 (ILLAIYFLLNDSFVCGQYYYYGV). The Cytoplasmic segment spans residues 95-143 (LHENKLATVGHEPKPLLPELVENGELLREEEDMIQGGSSAESPRSSRRR). The residue at position 136 (S136) is a Phosphoserine. A helical membrane pass occupies residues 144 to 164 (SAITAALAIAHTISTASAYPL). Residues 165–184 (NVGSTQSQVGPPGDGKNSQL) lie on the Vacuolar side of the membrane. Residues 185–205 (GTILSWIGASFYVGARIPQLI) traverse the membrane as a helical segment. In terms of domain architecture, PQ-loop 2 spans 185–247 (GTILSWIGAS…SCRFLDNQNK (63 aa)). The Cytoplasmic portion of the chain corresponds to 206–215 (KNYNRKSTDG). The helical transmembrane segment at 216 to 236 (LSPFLFATTLLCNITYNLSIF) threads the bilayer. Residues 237–249 (TSCRFLDNQNKRE) lie on the Vacuolar side of the membrane. The helical transmembrane segment at 250–270 (FIVNELPFIFGSAGTIAFDLI) threads the bilayer. Topologically, residues 271 to 317 (YFYQYYILYATDMQLRELERELYSPEEDSAAQLVTERTSLLSGETQT) are cytoplasmic.

This sequence belongs to the laat-1 family.

The protein localises to the vacuole membrane. It catalyses the reaction L-histidine(out) + L-arginine(in) = L-histidine(in) + L-arginine(out). Functionally, amino acid transporter that moves arginine across the vacuolar membrane. Active during nitrogen starvation when it exports stored vacuolar arginine to the cytosol, for use as a nitrogen source. Has been shown to function as an arginine/histidine antiporter when substrate is present on both sides of the membrane, but may also function as a uniporter. The polypeptide is Vacuolar arginine/histidine antiporter YPQ2 (YPQ2) (Saccharomyces cerevisiae (strain ATCC 204508 / S288c) (Baker's yeast)).